The chain runs to 515 residues: Maturase K (515 aa).

Belongs to the intron maturase 2 family. MatK subfamily.

It localises to the plastid. The protein resides in the chloroplast. In terms of biological role, usually encoded in the trnK tRNA gene intron. Probably assists in splicing its own and other chloroplast group II introns. This is Maturase K from Pinus attenuata (Knobcone pine).